We begin with the raw amino-acid sequence, 197 residues long: Small ribosomal subunit protein uS4 (197 aa).

In terms of domain architecture, S4 RNA-binding spans Arg-94–Asn-158.

This sequence belongs to the universal ribosomal protein uS4 family. As to quaternary structure, part of the 30S ribosomal subunit. Contacts protein S5. The interaction surface between S4 and S5 is involved in control of translational fidelity.

Its function is as follows. One of the primary rRNA binding proteins, it binds directly to 16S rRNA where it nucleates assembly of the body of the 30S subunit. Functionally, with S5 and S12 plays an important role in translational accuracy. The protein is Small ribosomal subunit protein uS4 (rpsD) of Carsonella ruddii (strain PV).